The sequence spans 194 residues: Adenylate kinase (194 aa).

An ATP-binding site is contributed by 10–15 (GAGKGT). Residues 30–59 (STGDMLRAAVAQQSEIGKRAKAVMDAGQLV) form an NMP region. Residues threonine 31, arginine 36, 57-59 (QLV), 85-88 (GYPR), and glutamine 92 contribute to the AMP site. Residues 126–142 (SRVAETIAKGGQVRSDD) form an LID region. Arginine 127 contributes to the ATP binding site. Positions 139 and 150 each coordinate AMP. Alanine 178 contributes to the ATP binding site.

Belongs to the adenylate kinase family. Monomer.

It localises to the cytoplasm. The enzyme catalyses AMP + ATP = 2 ADP. Its pathway is purine metabolism; AMP biosynthesis via salvage pathway; AMP from ADP: step 1/1. Functionally, catalyzes the reversible transfer of the terminal phosphate group between ATP and AMP. Plays an important role in cellular energy homeostasis and in adenine nucleotide metabolism. This Brucella anthropi (strain ATCC 49188 / DSM 6882 / CCUG 24695 / JCM 21032 / LMG 3331 / NBRC 15819 / NCTC 12168 / Alc 37) (Ochrobactrum anthropi) protein is Adenylate kinase.